The primary structure comprises 811 residues: Phosphoinositide 3-kinase adapter protein 1 (811 aa).

In terms of domain architecture, TIR spans 8–146; sequence RGCDILIFYS…AVRKAISEDS (139 aa). Residues 10 to 145 are necessary and sufficient to mediate inhibition of NF-kappa-B downstream of activated TLRs; may mediate interaction with MYD88 and TIRAP; it reads CDILIFYSPD…AAVRKAISED (136 aa). A disordered region spans residues 146–169; the sequence is SGCDSVTDTEPEDERELPFSKQTN. The DBB domain occupies 182–318; the sequence is VQPDRIRCGA…NIPASGLHLF (137 aa). Position 264 is a phosphotyrosine (Tyr264). 3 positions are modified to phosphotyrosine; by SYK: Tyr420, Tyr445, and Tyr460. Phosphotyrosine; by ABL1 is present on Tyr513. The interval 525–551 is disordered; sequence DLANRPPVPVPRPEASAPGPPPPPDNE. Residues 530–550 show a composition bias toward pro residues; sequence PPVPVPRPEASAPGPPPPPDN. Tyr553, Tyr570, and Tyr594 each carry phosphotyrosine; by ABL1. Ser642 bears the Phosphoserine mark. Phosphotyrosine; by ABL1 is present on Tyr694. Residues 702–811 are disordered; sequence VLPARTELRR…PPPPVPPRGR (110 aa). Residues 707-716 are compositionally biased toward basic and acidic residues; that stretch reads TELRRGDWKT. The span at 717-740 shows a compositional bias: low complexity; the sequence is DSMSSTASSTSNRSSTRSLLSVSS. Phosphoserine is present on Ser718. Over residues 801–811 the composition is skewed to pro residues; sequence HPPPPVPPRGR.

As to quaternary structure, homooligomer. Interacts (phosphorylated on tyrosine residues within YXXM motifs) with PIK3R1 (via SH2 domain); required for BCR- and TLR-mediated activation of phosphoinositide 3-kinase. Interacts (via polyproline C-terminal region) with ABI1 (via SH3 domain); the interaction promotes phosphorylation of PIK3AP1 by ABL1. May interact with MYD88 and TIRAP. In terms of processing, constitutively phosphorylated. Phosphorylated on tyrosine residues in C-terminal region by ABL1. Phosphorylated on tyrosine residues within the YXXM motifs by BTK and SYK. Isoform 1 and isoform 2 are phosphorylated on tyrosine residues, most likely within the YXXM motifs, via CD19 activation. Toll-like receptor activation induces appearance of a phosphorylated form associated with membranes. In terms of tissue distribution, predominantly expressed in spleen (at protein level). Expressed at lower levels in thymus, liver and lung. Expressed in B-cells, macrophages and natural killer (NK) cells.

It is found in the cytoplasm. The protein resides in the cell membrane. Signaling adapter that contributes to B-cell development by linking B-cell receptor (BCR) signaling to the phosphoinositide 3-kinase (PI3K)-Akt signaling pathway. Has a complementary role to the BCR coreceptor CD19, coupling BCR and PI3K activation by providing a docking site for the PI3K subunit PIK3R1. Alternatively, links Toll-like receptor (TLR) signaling to PI3K activation, a process preventing excessive inflammatory cytokine production. Also involved in the activation of PI3K in natural killer cells. May be involved in the survival of mature B-cells via activation of REL. The polypeptide is Phosphoinositide 3-kinase adapter protein 1 (Pik3ap1) (Mus musculus (Mouse)).